The primary structure comprises 106 residues: Insulin-2 (106 aa).

The N-terminal stretch at 1–23 (MALWMQCLPLVLVLLFSTPNTEA) is a signal peptide. Intrachain disulfides connect Cys-30–Cys-92, Cys-42–Cys-105, and Cys-91–Cys-96. Residues 56–83 (DIEQAQVNGPQDNELDGMQFQPQEYQKM) constitute a propeptide, c peptide.

This sequence belongs to the insulin family. In terms of assembly, heterodimer of a B chain and an A chain linked by two disulfide bonds.

It localises to the secreted. Its function is as follows. Insulin decreases blood glucose concentration. It increases cell permeability to monosaccharides, amino acids and fatty acids. It accelerates glycolysis, the pentose phosphate cycle, and glycogen synthesis in liver. The polypeptide is Insulin-2 (ins-b) (Xenopus laevis (African clawed frog)).